A 288-amino-acid polypeptide reads, in one-letter code: Probable syndecan (288 aa).

The signal sequence occupies residues 1-26 (MILKLNFCLSTYSVLILLSLSTQAFA). Topologically, residues 27–231 (ANQAKTKVVP…ETLANGFYAA (205 aa)) are extracellular. A disordered region spans residues 67 to 175 (EVNGSGYPTD…NIHNDEDFFT (109 aa)). A glycan (N-linked (GlcNAc...) asparagine) is linked at N69. Residues S71 and S86 are each glycosylated (O-linked (Xyl...) (glycosaminoglycan) serine). Residues 89–104 (PPSSATTKSDKVTSPS) show a composition bias toward polar residues. A compositionally biased stretch (low complexity) spans 106-124 (AVVTAKPTTVPTTTASFKP). Residues 141 to 164 (VEEDEDDDEDEDEDDEDDEEDFAD) show a composition bias toward acidic residues. S214 carries O-linked (Xyl...) (glycosaminoglycan) serine glycosylation. The chain crosses the membrane as a helical span at residues 232–252 (IAGGVLVAVITAILLVLFVVF). At 253-288 (RIRKKDEGSYALDEPKQARPYASYGYTKASTKEFYA) the chain is on the cytoplasmic side.

It belongs to the syndecan proteoglycan family.

Its subcellular location is the membrane. The protein localises to the cell surface. It localises to the cell junction. The protein resides in the cytoplasm. Functionally, cell surface proteoglycan that bears heparan sulfate. Required for correct mitotic spindle orientation of the ABar blastomere division plane and this may be through modulation of astral microtubule array, and in association with the wnt-signaling proteins mig-5 and dsh-2. Involved in the migration of AQR and PQR neurons, which descend from the Q neuroblasts. Promotes the axon guidance of D-type motor neurons. The chain is Probable syndecan from Caenorhabditis elegans.